A 1648-amino-acid polypeptide reads, in one-letter code: Homeostatic regulator of DAG (1648 aa).

Residues 5 to 101 (IPPTLPLDLQ…YRVTTINSTS (97 aa)) enclose the DMAP1-binding domain. 3 N-linked (GlcNAc...) asparagine glycosylation sites follow: asparagine 28, asparagine 71, and asparagine 98. Disordered stretches follow at residues 52–73 (PYTP…RNTS) and 96–130 (TINS…ENGS). Over residues 60-71 (NSRKSKHLHRRN) the composition is skewed to basic residues. 2 stretches are compositionally biased toward polar residues: residues 96–105 (TINSTSANNT) and 113–128 (YTAS…SDEN). The residue at position 99 (serine 99) is a Phosphoserine. 3 N-linked (GlcNAc...) asparagine glycosylation sites follow: asparagine 128, asparagine 151, and asparagine 209. The fatty acyl-AMP ligase-like domain 1 stretch occupies residues 158–893 (AMTDSLPLIL…VEKKFLNNDL (736 aa)). A helical transmembrane segment spans residues 228–248 (VIEFTIALLGCFISGMAAVPV). Residues asparagine 288, asparagine 328, asparagine 575, asparagine 644, and asparagine 730 are each glycosylated (N-linked (GlcNAc...) asparagine). Phosphoserine is present on serine 751. Residues asparagine 881, asparagine 917, asparagine 995, and asparagine 1009 are each glycosylated (N-linked (GlcNAc...) asparagine). The interval 950–1648 (VKPKLALQCS…LLSDYEKDNI (699 aa)) is fatty acyl-AMP ligase-like domain 2. Residues 1061 to 1081 (YVAMIMACLYCNLLVIPLPSV) traverse the membrane as a helical segment. A glycan (N-linked (GlcNAc...) asparagine) is linked at asparagine 1198. Residues 1224–1244 (GLGFMFSCLLGIYTGASTCLF) form a helical membrane-spanning segment. Residues asparagine 1301, asparagine 1302, asparagine 1447, asparagine 1472, asparagine 1488, asparagine 1565, asparagine 1597, and asparagine 1634 are each glycosylated (N-linked (GlcNAc...) asparagine).

The protein resides in the vacuole membrane. It is found in the mitochondrion membrane. Functionally, homeostatic regulator of a chemically distinct subset of diacylglycerols (DAGs) with C36 chain length that prevents the toxic accumulation of these specific DAGs in the logarithmic growth phase, which otherwise leads to endoplasmic reticulum stress. Maintains the basal level of DAG subspecies by directly facilitating DAG to triacylglycerol (TAG) conversion process, possibly via adenylation activity of its FLD domains. Does not affect the abundant DAG species (representing over 90% of total DAG pool), comprised of C32 and C34 chain lengths. Required for vacuole fusion-mediated osmoadaptation. This is Homeostatic regulator of DAG from Saccharomyces cerevisiae (strain ATCC 204508 / S288c) (Baker's yeast).